The following is a 110-amino-acid chain: UPF0122 protein BPUM_1495 (110 aa).

Belongs to the UPF0122 family.

Might take part in the signal recognition particle (SRP) pathway. This is inferred from the conservation of its genetic proximity to ftsY/ffh. May be a regulatory protein. This Bacillus pumilus (strain SAFR-032) protein is UPF0122 protein BPUM_1495.